The following is a 571-amino-acid chain: Wee1-like protein kinase 1-A (571 aa).

The tract at residues 1-101 (MSLQPVPHRL…PDCPGTPPHK (101 aa)) is disordered. The span at 81–98 (PASPPGPAASPPDCPGTP) shows a compositional bias: pro residues. Residues 224 to 494 (FHELEKIGSG…SMALVKHSVL (271 aa)) form the Protein kinase domain. ATP contacts are provided by residues 230–238 (IGSGEFGSV) and K253. Residue D351 is the Proton acceptor of the active site. The Mg(2+) site is built by N356 and D388. Residues 500–539 (KNAEQLRIELNAEKFKNALLQKELKKAQIAKAAAEERALF) adopt a coiled-coil conformation.

This sequence belongs to the protein kinase superfamily. Ser/Thr protein kinase family. WEE1 subfamily. In terms of tissue distribution, zygotically expressed. Expressed in regions of the embryo that are devoid of mitotic cells, such as the involuting mesoderm.

The protein localises to the nucleus. It carries out the reaction L-tyrosyl-[protein] + ATP = O-phospho-L-tyrosyl-[protein] + ADP + H(+). In terms of biological role, acts as a zygotic negative regulator of entry into mitosis (G2 to M transition) by protecting the nucleus from cytoplasmically activated cyclin B1-complexed cdk1 before the onset of mitosis by mediating phosphorylation of cdk1 on 'Tyr-15'. Specifically phosphorylates and inactivates cyclin B1-complexed cdk1 reaching a maximum during G2 phase and a minimum as cells enter M phase. Phosphorylation of cyclin B1-cdk1 occurs exclusively on 'Tyr-15' and phosphorylation of monomeric cdk1 does not occur. Involved in convergent extension of the paraxial mesoderm during neurulation by inhibiting the cell cycle. The sequence is that of Wee1-like protein kinase 1-A (wee1-a) from Xenopus laevis (African clawed frog).